The sequence spans 789 residues: Larval serum protein 1 beta chain (789 aa).

Residues 1–16 (MKIAIALLACLGLAAA) form the signal peptide.

It belongs to the hemocyanin family. As to quaternary structure, heterohexamer, composed of three subunits, alpha, beta and gamma. As to expression, larval hemolymph.

The protein resides in the secreted. Its subcellular location is the extracellular space. In terms of biological role, larval storage protein (LSP) which may serve as a store of amino acids for synthesis of adult proteins. The sequence is that of Larval serum protein 1 beta chain (Lsp1beta) from Drosophila melanogaster (Fruit fly).